A 412-amino-acid chain; its full sequence is MIVVNKEDCIRCGACQGTCPTAAIEVTPEDVIYCDICGGEPKCVDACPTGALKIEDLVVDEAGNTQGRIVFNPDKCNECGDCVEVCPPQILKLDEGKVKKIPLQGFCVMCQKCVDICPVGVIGVEGIKEPAKVELEIEGPIFIADCVGCGMCVPECPVDAITLEKVGGVIEIDEDTCIKCGVCAQTCPWNAVYISGKKPEKRAKEIRKFELDEEACIGCNTCVEACPGDFIVPKSSNLTVELPAICTACGLCEQLCPVDAIDLDVELGPAKPASEEGLVWDEGKCDFIGACANICPNDAIRVVTREGMKLPDNEKVDEEPSFAMCTRCGACTMACPKGALSLVDMDKVIDGEVVKRKRVQYNPALCDQCGDCIEACPYDMLKLTDEKVPLKGFCILCDQCIPACPKGALSLK.

4Fe-4S ferredoxin-type domains are found at residues 1–29 (MIVV…VTPE), 30–57 (DVIY…IEDL), 67–96 (GRIV…LDEG), 97–127 (KVKK…VEGI), 138–166 (EGPI…LEKV), 168–197 (GVIE…ISGK), 207–236 (RKFE…PKSS), 238–266 (LTVE…LDVE), 276–305 (EGLV…VVTR), 314–345 (EKVD…LVDM), 357–386 (KRVQ…LTDE), and 385–412 (DEKV…LSLK). Positions 9, 12, 15, and 19 each coordinate [4Fe-4S] cluster. 24 residues coordinate [4Fe-4S] cluster: C76, C79, C82, C86, C107, C110, C113, C117, C146, C149, C152, C156, C177, C180, C183, C187, C216, C219, C222, C226, C246, C249, C252, and C256. [4Fe-4S] cluster is bound by residues C325, C328, C331, C335, C366, C369, C372, C376, C394, C397, C400, and C404.

It depends on [4Fe-4S] cluster as a cofactor.

This is Polyferredoxin protein MvhB (mvhB) from Methanothermobacter marburgensis (strain ATCC BAA-927 / DSM 2133 / JCM 14651 / NBRC 100331 / OCM 82 / Marburg) (Methanobacterium thermoautotrophicum).